The sequence spans 102 residues: Feather keratin (102 aa).

S1 is modified (N-acetylserine).

This sequence belongs to the avian keratin family. In terms of assembly, the avian keratins (F-ker, S-ker, C-ker and B-ker) are a complex mixture of very similar polypeptides.

The chain is Feather keratin from Dromaius novaehollandiae (Emu).